A 151-amino-acid polypeptide reads, in one-letter code: UPF0208 membrane protein PC1_2779 (151 aa).

Helical transmembrane passes span 46–66 (FGIRIMPPLAVFTLTWQIALG) and 69–89 (LGPAIATALFACSLPLQGLWW).

It belongs to the UPF0208 family.

It localises to the cell inner membrane. The chain is UPF0208 membrane protein PC1_2779 from Pectobacterium carotovorum subsp. carotovorum (strain PC1).